The sequence spans 423 residues: Anhydromevalonate phosphate decarboxylase (423 aa).

The Mn(2+) site is built by Asn-134 and Glu-197. Asp-245 acts as the Proton acceptor in catalysis.

The protein belongs to the UbiD family. Prenylated FMN serves as cofactor. Requires Mn(2+) as cofactor.

The catalysed reaction is (2E)-3-methyl-5-phosphooxypent-2-enoate + H(+) = isopentenyl phosphate + CO2. It functions in the pathway isoprenoid biosynthesis; isopentenyl diphosphate biosynthesis via mevalonate pathway. Its function is as follows. Catalyzes the conversion of trans-anhydromevalonate 5-phosphate (tAHMP) into isopentenyl phosphate. Involved in the archaeal mevalonate (MVA) pathway, which provides fundamental precursors for isoprenoid biosynthesis, such as isopentenyl diphosphate (IPP) and dimethylallyl diphosphate (DMAPP). The polypeptide is Anhydromevalonate phosphate decarboxylase (Methanothermobacter thermautotrophicus (strain ATCC 29096 / DSM 1053 / JCM 10044 / NBRC 100330 / Delta H) (Methanobacterium thermoautotrophicum)).